Consider the following 447-residue polypeptide: Adenylosuccinate synthetase (447 aa).

GTP-binding positions include 12–18 (GDEGKGK) and 40–42 (GHT). D13 functions as the Proton acceptor in the catalytic mechanism. Residues D13 and G40 each contribute to the Mg(2+) site. IMP is bound by residues 13–16 (DEGK), 38–41 (NAGH), T128, R142, Q223, T238, and R302. The active-site Proton donor is H41. 298-304 (TTTGRKR) serves as a coordination point for substrate. GTP-binding positions include R304, 330 to 332 (KLD), and 412 to 414 (SLG).

This sequence belongs to the adenylosuccinate synthetase family. In terms of assembly, homodimer. It depends on Mg(2+) as a cofactor.

The protein localises to the cytoplasm. It carries out the reaction IMP + L-aspartate + GTP = N(6)-(1,2-dicarboxyethyl)-AMP + GDP + phosphate + 2 H(+). It functions in the pathway purine metabolism; AMP biosynthesis via de novo pathway; AMP from IMP: step 1/2. Functionally, plays an important role in the de novo pathway of purine nucleotide biosynthesis. Catalyzes the first committed step in the biosynthesis of AMP from IMP. This chain is Adenylosuccinate synthetase, found in Trichormus variabilis (strain ATCC 29413 / PCC 7937) (Anabaena variabilis).